Consider the following 433-residue polypeptide: MVNVVLGSQWGDEGKGKLVDLLVGKYDIVARCAGGNNAGHTIVVNGVKYDFHMLPSGLVNPNCQNLLGNGVVIHVPSFFKELETLEAKGLKNARSRLFVSSRAHLVFDFHQVTDKLRELELSGRSKDGKNIGTTGKGIGPTYSTKASRSGLRVHHLVNDQPGAWEEFVARYKRLLETRRQRYGDFEYDFEAKPAEYKKLREQLKPFVVDSVVFMHNAIEAKKKILVEGANALMLDIDFGTYPYVTSSNTGIGGVLTGLGIPPRTIDEIYGVVKAYTTRVGEGPFPTEQLNENGEKLQTIGAEFGVTTGRKRRCGWLDLVVLKYSTLINGYTSLNITKLDVLDTFKEIPVGISYSIQGKKLDLFPEDLNILGKVEVEYKVLPGWDQDITKITKYEDLPENAKKYLKYIENFVGVPVEWVGTGPARESMLHKEIK.

GTP-binding positions include 11-17 (GDEGKGK) and 39-41 (GHT). Catalysis depends on aspartate 12, which acts as the Proton acceptor. The Mg(2+) site is built by aspartate 12 and glycine 39. IMP contacts are provided by residues 12-15 (DEGK), 37-40 (NAGH), threonine 134, arginine 148, asparagine 230, threonine 245, and arginine 309. Histidine 40 functions as the Proton donor in the catalytic mechanism. 305–311 (VTTGRKR) contributes to the substrate binding site. GTP is bound by residues arginine 311, 337-339 (KLD), and 419-421 (GTG).

It belongs to the adenylosuccinate synthetase family. Homodimer. The cofactor is Mg(2+).

The protein resides in the cytoplasm. The enzyme catalyses IMP + L-aspartate + GTP = N(6)-(1,2-dicarboxyethyl)-AMP + GDP + phosphate + 2 H(+). The protein operates within purine metabolism; AMP biosynthesis via de novo pathway; AMP from IMP: step 1/2. Its function is as follows. Plays an important role in the de novo pathway and in the salvage pathway of purine nucleotide biosynthesis. Catalyzes the first committed step in the biosynthesis of AMP from IMP. The sequence is that of Adenylosuccinate synthetase from Saccharomyces cerevisiae (strain Lalvin EC1118 / Prise de mousse) (Baker's yeast).